Reading from the N-terminus, the 142-residue chain is Galactose-binding lectin (142 aa).

Residues 1-141 (TYAEVESFGV…GTDIWDLLLL (141 aa)) enclose the Galectin domain.

Homotetramer.

With respect to regulation, cytotoxic activity against L.infantum promastigotes is completely inhibited by D-galactose. Inhibition activity against biofilm formation by S.aureus and S.epidermidis is inhibited by alpha-lactose. Hemagglutination activity is inhibited by alpha-lactose (MIC=100 mM), beta-lactose (MIC=100 mM), lactulose (MIC=100 mM), bovine submaxillary mucin (BSM) (MIC=32 ug/ml), fetuin (MIC=16 ug/ml), porcine stomach mucin (PSM) type 2 (MIC=8 ug/ml) and PSM type 3 (MIC=8 ug/ml). In terms of biological role, galactose-binding lectin. Displays antibacterial and hemagglutinin activity. Inhibits the growth of L.infantum promastigotes by damaging their membrane integrity and inducing cell apoptosis via the production of reactive oxygen species (ROS). Inhibition of L.infantum promastigotes appears to increase with time (MIC=1.2 uM/ml after 24 hours, MIC=0.9 uM/ml after 48 hours and MIC=0.6 uM/ml after 72 hours). Agglutinates Gram-negative and Gram-positive bacteria including E.coli, S.aureus and S.epidermidis, and inhibits biofilm formation by S.aureus and S.epidermidis. Displays hemagglutination activity towards all types of human erythrocytes (O, A and B) and rabbit erythrocytes. In Chondrilla caribensis (Chicken liver sponge), this protein is Galactose-binding lectin.